Consider the following 456-residue polypeptide: Argininosuccinate lyase (456 aa).

This sequence belongs to the lyase 1 family. Argininosuccinate lyase subfamily.

The protein resides in the cytoplasm. It catalyses the reaction 2-(N(omega)-L-arginino)succinate = fumarate + L-arginine. Its pathway is amino-acid biosynthesis; L-arginine biosynthesis; L-arginine from L-ornithine and carbamoyl phosphate: step 3/3. The sequence is that of Argininosuccinate lyase from Listeria innocua serovar 6a (strain ATCC BAA-680 / CLIP 11262).